The primary structure comprises 486 residues: Pup--protein ligase (486 aa).

E33 provides a ligand contact to Mg(2+). R76 lines the ATP pocket. Y78 contacts Mg(2+). D80 functions as the Proton acceptor in the catalytic mechanism. Residue E86 participates in Mg(2+) binding. Residues T89 and W451 each coordinate ATP.

Belongs to the Pup ligase/Pup deamidase family. Pup-conjugating enzyme subfamily.

The catalysed reaction is ATP + [prokaryotic ubiquitin-like protein]-L-glutamate + [protein]-L-lysine = ADP + phosphate + N(6)-([prokaryotic ubiquitin-like protein]-gamma-L-glutamyl)-[protein]-L-lysine.. Its pathway is protein degradation; proteasomal Pup-dependent pathway. The protein operates within protein modification; protein pupylation. In terms of biological role, catalyzes the covalent attachment of the prokaryotic ubiquitin-like protein modifier Pup to the proteasomal substrate proteins, thereby targeting them for proteasomal degradation. This tagging system is termed pupylation. The ligation reaction involves the side-chain carboxylate of the C-terminal glutamate of Pup and the side-chain amino group of a substrate lysine. This Bifidobacterium longum (strain DJO10A) protein is Pup--protein ligase.